The primary structure comprises 288 residues: Protein FANTASTIC FOUR 3 (288 aa).

The segment covering 48 to 60 has biased composition (basic and acidic residues); sequence HAEDTRNRNDDKA. 3 disordered regions span residues 48 to 100, 146 to 172, and 222 to 261; these read HAED…YYVQ, ETTT…PLTT, and NEFV…IENV. The segment covering 66-90 has biased composition (low complexity); the sequence is SDSSGWSSLQSLSSGSSSSTKTTTS. One can recognise an FAF domain in the interval 165 to 217; it reads DLPPPLTTMRGFQCIQMRPHRENGRLVMTATNAPPRNGCFQADRSNGRLRLSI. The span at 223 to 256 shows a compositional bias: acidic residues; that stretch reads EFVENEEETIEPEETEEYEEEEEEEEDEDEDEVM.

It belongs to the fantastic four family. Expressed in the shoot apex, stamens, young leaves and young siliques, but not in old leaves. Detected in provascular and vascular tissue, but not in the vegetative meristem. In inflorescences, restricted to the vasculature and absent from young flowers, except from anthers.

In terms of biological role, able to repress WUS when constitutively overexpressed, but have no effect on CLV3. The protein is Protein FANTASTIC FOUR 3 (FAF3) of Arabidopsis thaliana (Mouse-ear cress).